A 599-amino-acid polypeptide reads, in one-letter code: Elongation factor 4 (599 aa).

Positions 2–184 (KHIRNFSIIA…RLVRDIPPPE (183 aa)) constitute a tr-type G domain. GTP-binding positions include 14 to 19 (DHGKST) and 131 to 134 (NKID).

It belongs to the TRAFAC class translation factor GTPase superfamily. Classic translation factor GTPase family. LepA subfamily.

Its subcellular location is the cell inner membrane. It carries out the reaction GTP + H2O = GDP + phosphate + H(+). Required for accurate and efficient protein synthesis under certain stress conditions. May act as a fidelity factor of the translation reaction, by catalyzing a one-codon backward translocation of tRNAs on improperly translocated ribosomes. Back-translocation proceeds from a post-translocation (POST) complex to a pre-translocation (PRE) complex, thus giving elongation factor G a second chance to translocate the tRNAs correctly. Binds to ribosomes in a GTP-dependent manner. The sequence is that of Elongation factor 4 from Erwinia tasmaniensis (strain DSM 17950 / CFBP 7177 / CIP 109463 / NCPPB 4357 / Et1/99).